We begin with the raw amino-acid sequence, 365 residues long: Phospho-N-acetylmuramoyl-pentapeptide-transferase (365 aa).

9 consecutive transmembrane segments (helical) span residues 19 to 39 (LLILLTVVLFLLMTLFQWLLT), 47 to 67 (AVILPVSVSAIACGLLGFGVI), 91 to 111 (AGTPTMGGIFFIPVAVGVALI), 115 to 135 (FDPQVVAVGIVTLAYMMIGWV), 155 to 175 (LLLQIAVAVLFCLWMLWTGSP), 184 to 204 (GNLIIPLGWLFWILAIFVLVA), 224 to 244 (AIAFLGLAAIVAPTSVGLMIF), 281 to 301 (AVGLLSGNLWGLFIISGIFFV), and 344 to 364 (TQIVGVFYLINAGLAILGFIS).

This sequence belongs to the glycosyltransferase 4 family. MraY subfamily. Mg(2+) serves as cofactor.

It is found in the cell inner membrane. The catalysed reaction is UDP-N-acetyl-alpha-D-muramoyl-L-alanyl-gamma-D-glutamyl-meso-2,6-diaminopimeloyl-D-alanyl-D-alanine + di-trans,octa-cis-undecaprenyl phosphate = di-trans,octa-cis-undecaprenyl diphospho-N-acetyl-alpha-D-muramoyl-L-alanyl-D-glutamyl-meso-2,6-diaminopimeloyl-D-alanyl-D-alanine + UMP. The protein operates within cell wall biogenesis; peptidoglycan biosynthesis. In terms of biological role, catalyzes the initial step of the lipid cycle reactions in the biosynthesis of the cell wall peptidoglycan: transfers peptidoglycan precursor phospho-MurNAc-pentapeptide from UDP-MurNAc-pentapeptide onto the lipid carrier undecaprenyl phosphate, yielding undecaprenyl-pyrophosphoryl-MurNAc-pentapeptide, known as lipid I. This chain is Phospho-N-acetylmuramoyl-pentapeptide-transferase, found in Gloeothece citriformis (strain PCC 7424) (Cyanothece sp. (strain PCC 7424)).